Here is a 483-residue protein sequence, read N- to C-terminus: Glycogen synthase kinase-3 alpha (483 aa).

Gly residues predominate over residues 1-15; sequence MSGGGPSGGGPGGSG. The tract at residues 1 to 96 is disordered; sequence MSGGGPSGGG…PPPGVKLGRD (96 aa). Ser-2 bears the N-acetylserine mark. The residue at position 2 (Ser-2) is a Phosphoserine. Ser-21 bears the Phosphoserine; by PKB/AKT1 mark. A compositionally biased stretch (gly residues) spans 25–82; that stretch reads PGGGGGGGGGGPGGSASGPGGTGGGKASVGAMGGGVGASSSGGGPSGSGGGGSGGPGA. Phosphoserine occurs at positions 72, 77, and 97. The Protein kinase domain occupies 119–403; the sequence is YTDIKVIGNG…PLEACAHSFF (285 aa). ATP is bound by residues 125-133 and Lys-148; that span reads IGNGSFGVV. The active-site Proton acceptor is the Asp-244. Tyr-279 carries the phosphotyrosine modification. Positions 443–483 are disordered; it reads PHLRSPSGPATLTSSSQALTETQTGQDWQAPDATPTLTNSS. A compositionally biased stretch (polar residues) spans 450-469; that stretch reads GPATLTSSSQALTETQTGQD.

Belongs to the protein kinase superfamily. CMGC Ser/Thr protein kinase family. GSK-3 subfamily. As to quaternary structure, monomer. Interacts with ARRB2, AXIN1 and CTNNB1/beta-catenin. Interacts with CTNND2. Interacts with LMBR1L. Interacts with DDX3X. Interacts with TNFRSF10B. In terms of processing, phosphorylated by AKT1 at Ser-21: upon insulin-mediated signaling, the activated PKB/AKT1 protein kinase phosphorylates and deactivates GSK3A, resulting in the dephosphorylation and activation of GYS1. Activated by phosphorylation at Tyr-279.

The catalysed reaction is L-seryl-[tau protein] + ATP = O-phospho-L-seryl-[tau protein] + ADP + H(+). It catalyses the reaction L-threonyl-[tau protein] + ATP = O-phospho-L-threonyl-[tau protein] + ADP + H(+). It carries out the reaction L-seryl-[protein] + ATP = O-phospho-L-seryl-[protein] + ADP + H(+). The enzyme catalyses L-threonyl-[protein] + ATP = O-phospho-L-threonyl-[protein] + ADP + H(+). Activated by phosphorylation at Tyr-279. In response to insulin, inhibited by phosphorylation at Ser-21 by PKB/AKT1; phosphorylation at this site causes a conformational change, preventing access of substrates to the active site. Inhibited by lithium. Constitutively active protein kinase that acts as a negative regulator in the hormonal control of glucose homeostasis, Wnt signaling and regulation of transcription factors and microtubules, by phosphorylating and inactivating glycogen synthase (GYS1 or GYS2), CTNNB1/beta-catenin, APC and AXIN1. Requires primed phosphorylation of the majority of its substrates. Contributes to insulin regulation of glycogen synthesis by phosphorylating and inhibiting GYS1 activity and hence glycogen synthesis. Regulates glycogen metabolism in liver, but not in muscle. May also mediate the development of insulin resistance by regulating activation of transcription factors. In Wnt signaling, regulates the level and transcriptional activity of nuclear CTNNB1/beta-catenin. Facilitates amyloid precursor protein (APP) processing and the generation of APP-derived amyloid plaques found in Alzheimer disease. May be involved in the regulation of replication in pancreatic beta-cells. Is necessary for the establishment of neuronal polarity and axon outgrowth. Through phosphorylation of the anti-apoptotic protein MCL1, may control cell apoptosis in response to growth factors deprivation. Acts as a regulator of autophagy by mediating phosphorylation of KAT5/TIP60 under starvation conditions, activating KAT5/TIP60 acetyltransferase activity and promoting acetylation of key autophagy regulators, such as ULK1 and RUBCNL/Pacer. Negatively regulates extrinsic apoptotic signaling pathway via death domain receptors. Promotes the formation of an anti-apoptotic complex, made of DDX3X, BRIC2 and GSK3B, at death receptors, including TNFRSF10B. The anti-apoptotic function is most effective with weak apoptotic signals and can be overcome by stronger stimulation. The chain is Glycogen synthase kinase-3 alpha (Gsk3a) from Rattus norvegicus (Rat).